The following is a 302-amino-acid chain: Cardiolipin synthase (CMP-forming) (302 aa).

The disordered stretch occupies residues P65–D84. Positions G71–D84 are enriched in low complexity. 5 helical membrane-spanning segments follow: residues I109–L129, F133–I153, I190–V212, L250–L270, and Q271–Y289.

The protein belongs to the CDP-alcohol phosphatidyltransferase class-I family. A divalent metal cation is required as a cofactor.

The protein resides in the mitochondrion inner membrane. It catalyses the reaction a CDP-1,2-diacyl-sn-glycerol + a 1,2-diacyl-sn-glycero-3-phospho-(1'-sn-glycerol) = a cardiolipin + CMP + H(+). Its function is as follows. Catalyzes the synthesis of cardiolipin (CL) (diphosphatidylglycerol) by specifically transferring a phosphatidyl group from CDP-diacylglycerol to phosphatidylglycerol (PG). CL is a key phospholipid in mitochondrial membranes and plays important roles in maintaining the functional integrity and dynamics of mitochondria under both optimal and stress conditions. The chain is Cardiolipin synthase (CMP-forming) (Crls1) from Rattus norvegicus (Rat).